We begin with the raw amino-acid sequence, 130 residues long: Anti-adapter protein IraD (130 aa).

Belongs to the GpW/Gp25 family. IraD subfamily. In terms of assembly, interacts with RssB.

It is found in the cytoplasm. Functionally, inhibits RpoS proteolysis by regulating RssB activity, thereby increasing the stability of the sigma stress factor RpoS during oxidative stress. Its effect on RpoS stability is due to its interaction with RssB, which probably blocks the interaction of RssB with RpoS, and the consequent delivery of the RssB-RpoS complex to the ClpXP protein degradation pathway. In Escherichia coli O139:H28 (strain E24377A / ETEC), this protein is Anti-adapter protein IraD.